Reading from the N-terminus, the 136-residue chain is Small ribosomal subunit protein eS8 (136 aa).

A disordered region spans residues 1-23; that stretch reads MGVYHGNDLKKPTGGKKRPHQKV. Residues 13-23 show a composition bias toward basic residues; the sequence is TGGKKRPHQKV.

The protein belongs to the eukaryotic ribosomal protein eS8 family. Part of the 30S ribosomal subunit.

This chain is Small ribosomal subunit protein eS8, found in Hyperthermus butylicus (strain DSM 5456 / JCM 9403 / PLM1-5).